The following is a 542-amino-acid chain: Chaperonin GroEL 3 (542 aa).

Residues 30 to 33, K51, 87 to 91, G415, and D496 contribute to the ATP site; these read TLGP and DGTTT.

The protein belongs to the chaperonin (HSP60) family. Forms a cylinder of 14 subunits composed of two heptameric rings stacked back-to-back. Interacts with the co-chaperonin GroES.

The protein localises to the cytoplasm. It carries out the reaction ATP + H2O + a folded polypeptide = ADP + phosphate + an unfolded polypeptide.. Together with its co-chaperonin GroES, plays an essential role in assisting protein folding. The GroEL-GroES system forms a nano-cage that allows encapsulation of the non-native substrate proteins and provides a physical environment optimized to promote and accelerate protein folding. The polypeptide is Chaperonin GroEL 3 (Rhizobium johnstonii (strain DSM 114642 / LMG 32736 / 3841) (Rhizobium leguminosarum bv. viciae)).